Reading from the N-terminus, the 312-residue chain is Protein phosphatase PTC7 homolog fig (312 aa).

The PPM-type phosphatase domain occupies 42–306; the sequence is IQGSSKDQLA…DDITVILASV (265 aa). 3 residues coordinate Mn(2+): Asp83, Gly84, and Asp228.

It belongs to the PP2C family. Mg(2+) is required as a cofactor. Mn(2+) serves as cofactor.

The catalysed reaction is O-phospho-L-seryl-[protein] + H2O = L-seryl-[protein] + phosphate. The enzyme catalyses O-phospho-L-threonyl-[protein] + H2O = L-threonyl-[protein] + phosphate. The polypeptide is Protein phosphatase PTC7 homolog fig (Drosophila mojavensis (Fruit fly)).